The primary structure comprises 289 residues: Thiazole synthase (289 aa).

Lysine 132 functions as the Schiff-base intermediate with DXP in the catalytic mechanism. 1-deoxy-D-xylulose 5-phosphate is bound by residues glycine 193, 219 to 220, and 241 to 242; these read AG and NT.

Belongs to the ThiG family. As to quaternary structure, homotetramer. Forms heterodimers with either ThiH or ThiS.

It is found in the cytoplasm. It catalyses the reaction [ThiS sulfur-carrier protein]-C-terminal-Gly-aminoethanethioate + 2-iminoacetate + 1-deoxy-D-xylulose 5-phosphate = [ThiS sulfur-carrier protein]-C-terminal Gly-Gly + 2-[(2R,5Z)-2-carboxy-4-methylthiazol-5(2H)-ylidene]ethyl phosphate + 2 H2O + H(+). The protein operates within cofactor biosynthesis; thiamine diphosphate biosynthesis. Catalyzes the rearrangement of 1-deoxy-D-xylulose 5-phosphate (DXP) to produce the thiazole phosphate moiety of thiamine. Sulfur is provided by the thiocarboxylate moiety of the carrier protein ThiS. In vitro, sulfur can be provided by H(2)S. The chain is Thiazole synthase from Rhodospirillum rubrum (strain ATCC 11170 / ATH 1.1.1 / DSM 467 / LMG 4362 / NCIMB 8255 / S1).